The primary structure comprises 218 residues: Non-structural protein NS3 (218 aa).

Belongs to the orbivirus NS3 family.

In terms of biological role, may play a role in the release of virions from infected cells. This chain is Non-structural protein NS3 (Segment-10), found in Camelus dromedarius (Dromedary).